The primary structure comprises 204 residues: MGRYIGPLTKVSRRLGVFVGGDIESFQKRNFPPGQHGRTQGRKKLSDYGVRLQEKQKLRFLYGGIREGQFKRYFERASKAAGNTGTVLLQLLERRLDNVVYRLGFAKTRLQARQLVKHGHFLVNGKKVDIPSYELDKGDIIEVREKSKKLEVFKENLESRDPRSVPRWLEIDKDNFRGKVVEIPEEIELEIPVNVQYIIEYYSM.

Residues 94 to 157 (RRLDNVVYRL…KKLEVFKENL (64 aa)) form the S4 RNA-binding domain.

It belongs to the universal ribosomal protein uS4 family. In terms of assembly, part of the 30S ribosomal subunit. Contacts protein S5. The interaction surface between S4 and S5 is involved in control of translational fidelity.

Functionally, one of the primary rRNA binding proteins, it binds directly to 16S rRNA where it nucleates assembly of the body of the 30S subunit. In terms of biological role, with S5 and S12 plays an important role in translational accuracy. This Sulfurihydrogenibium sp. (strain YO3AOP1) protein is Small ribosomal subunit protein uS4.